The primary structure comprises 977 residues: Serine/threonine-protein kinase/endoribonuclease IRE1 (977 aa).

Positions 1–20 are cleaved as a signal peptide; it reads MPARWLLLLLALLLPPPGPG. At 21–445 the chain is on the lumenal side; it reads SFGRTSTVTL…EAPVDSMLKD (425 aa). An N-linked (GlcNAc...) asparagine glycan is attached at N178. Residues 446–466 traverse the membrane as a helical segment; sequence MATIILSTFLLVGWVAFIITY. Over 467 to 977 the chain is Cytoplasmic; that stretch reads PLSVHQQRQL…PQPPVIPYAL (511 aa). Positions 498-559 are disordered; it reads FHPHGDLTQD…PSLEQDDEDE (62 aa). The span at 513–551 shows a compositional bias: low complexity; sequence SSGPFSESSGTSSPSPSPRASNHSLHPSSSASRAGTSPS. One can recognise a Protein kinase domain in the interval 571 to 832; sequence FCPKDVLGHG…AKHVLKHPFF (262 aa). Residues 577 to 585, K599, and 643 to 645 contribute to the ATP site; these read LGHGAEGTI and ELC. Residue D688 is the Proton acceptor; for protein kinase activity of the active site. ATP-binding positions include 690-693 and D711; that span reads KPHN. S724 and S729 each carry phosphoserine. Residues 835–963 enclose the KEN domain; that stretch reads LEKQLQFFQD…ERLFQTYYWH (129 aa). Residues 906–907 are interacts with hydroxy-aryl-aldehyde inhibitors; it reads NK.

The protein belongs to the protein kinase superfamily. Ser/Thr protein kinase family. As to quaternary structure, monomer. Homodimer; disulfide-linked; homodimerization takes place in response to endoplasmic reticulum stress and promotes activation of the kinase and endoribonuclease activities. Dimer formation is driven by hydrophobic interactions within the N-terminal luminal domains and stabilized by disulfide bridges. Interacts (via the luminal region) with DNAJB9/ERdj4; interaction takes place in unstressed cells and promotes recruitment of HSPA5/BiP. Interacts (via the luminal region) with HSPA5/BiP; HSPA5/BiP is a negative regulator of the unfolded protein response (UPR) that prevents homodimerization of ERN1/IRE1 and subsequent activation of the protein. Interaction with HSPA5 also competitively inhibits ERN1 interaction with MANF. Interacts with PDIA6, a negative regulator of the UPR; the interaction is direct and disrupts homodimerization. Interacts with DAB2IP (via PH domain); the interaction occurs in a endoplasmic reticulum stress-induced dependent manner and is required for subsequent recruitment of TRAF2 to ERN1/IRE1. Interacts with TAOK3 and TRAF2. Interacts with RNF13. Interacts with LACC1. Interacts (when unphosphorylated) with DDRGK1; interaction is dependent on UFM1 and takes place in response to endoplasmic reticulum stress, regulating ERN1/IRE1-alpha stability. Interacts (via N-terminus) with P4HB/PDIA1; the interaction is enhanced by phosphorylation of P4HB by FAM20C in response to endoplasmic reticulum stress and results in attenuation of ERN1 activity. Interacts with TMBIM6; this interaction inhibits ERN1 activity. Interacts (via luminal domain) with MANF (via C-terminus); the interaction is decreased in the presence of increasing concentrations of Ca(2+). Requires Mg(2+) as cofactor. In terms of processing, autophosphorylated following homodimerization. Autophosphorylation promotes activation of the endoribonuclease domain. In response to ER stress, phosphorylated at Ser-724, Ser-729 and possibly Ser-726; phosphorylation promotes oligomerization and endoribonuclease activity. Dephosphorylated at Ser-724, Ser-729 and possibly Ser-726 by RPAP2 to abort failed ER-stress adaptation and trigger apoptosis. Phosphorylated at Ser-724; in response to the ER stressor tunicamycin. ADP-ribosylated by PARP16 upon ER stress, which increases both kinase and endonuclease activities. Expressed in liver (at protein level). Ubiquitously expressed. High levels in thymus, liver and lung. In the brain, preferentially expressed in cortical, hippocampal and olfactory neurons.

It is found in the endoplasmic reticulum membrane. It carries out the reaction L-seryl-[protein] + ATP = O-phospho-L-seryl-[protein] + ADP + H(+). The catalysed reaction is L-threonyl-[protein] + ATP = O-phospho-L-threonyl-[protein] + ADP + H(+). The kinase domain is activated by trans-autophosphorylation following homodimerization. Kinase activity is required for activation of the endoribonuclease domain. Endoribonuclease activity is specifically inhibited by hydroxy-aryl-aldehydes (HAA) MKC9989, OICR464 and OICR573. Functionally, serine/threonine-protein kinase and endoribonuclease that acts as a key sensor for the endoplasmic reticulum unfolded protein response (UPR). In unstressed cells, the endoplasmic reticulum luminal domain is maintained in its inactive monomeric state by binding to the endoplasmic reticulum chaperone HSPA5/BiP. Accumulation of misfolded protein in the endoplasmic reticulum causes release of HSPA5/BiP, allowing the luminal domain to homodimerize, promoting autophosphorylation of the kinase domain and subsequent activation of the endoribonuclease activity. The endoribonuclease activity is specific for XBP1 mRNA and excises 26 nucleotides from XBP1 mRNA. The resulting spliced transcript of XBP1 encodes a transcriptional activator protein that up-regulates expression of UPR target genes. Acts as an upstream signal for ER stress-induced GORASP2-mediated unconventional (ER/Golgi-independent) trafficking of CFTR to cell membrane by modulating the expression and localization of SEC16A. The sequence is that of Serine/threonine-protein kinase/endoribonuclease IRE1 from Mus musculus (Mouse).